A 182-amino-acid polypeptide reads, in one-letter code: NADH-quinone oxidoreductase subunit I (182 aa).

4Fe-4S ferredoxin-type domains follow at residues 52–82 and 92–121; these read LTRD…LQKA and DFFR…LTPD. [4Fe-4S] cluster-binding residues include cysteine 62, cysteine 65, cysteine 68, cysteine 72, cysteine 101, cysteine 104, cysteine 107, and cysteine 111.

This sequence belongs to the complex I 23 kDa subunit family. In terms of assembly, NDH-1 is composed of 13 different subunits. Subunits NuoA, H, J, K, L, M, N constitute the membrane sector of the complex. It depends on [4Fe-4S] cluster as a cofactor.

It localises to the cell inner membrane. It carries out the reaction a quinone + NADH + 5 H(+)(in) = a quinol + NAD(+) + 4 H(+)(out). In terms of biological role, NDH-1 shuttles electrons from NADH, via FMN and iron-sulfur (Fe-S) centers, to quinones in the respiratory chain. The immediate electron acceptor for the enzyme in this species is believed to be ubiquinone. Couples the redox reaction to proton translocation (for every two electrons transferred, four hydrogen ions are translocated across the cytoplasmic membrane), and thus conserves the redox energy in a proton gradient. The chain is NADH-quinone oxidoreductase subunit I from Pseudomonas syringae pv. tomato (strain ATCC BAA-871 / DC3000).